The following is a 491-amino-acid chain: Sucrose transport protein SUC7 (491 aa).

A compositionally biased stretch (basic and acidic residues) spans 1-13; it reads MSDLQANKDETTV. A disordered region spans residues 1 to 25; that stretch reads MSDLQANKDETTVDRQSSSSVDLDG. At 1–32 the chain is on the cytoplasmic side; sequence MSDLQANKDETTVDRQSSSSVDLDGPSPLRKM. Ser17 bears the Phosphoserine mark. The chain crosses the membrane as a helical span at residues 33-53; the sequence is ISVASIAAGIQFGWALQLSLL. The Extracellular segment spans residues 54–67; the sequence is TPYVQLLGVPHKWP. A helical transmembrane segment spans residues 68–88; that stretch reads SFIWLCGPVSGLLVQPSVGYF. The Cytoplasmic segment spans residues 89-100; that stretch reads SDRCTSRFGRRR. A helical membrane pass occupies residues 101–121; that stretch reads PFIATGALLVAVSVVLIGYAA. Topologically, residues 122-138 are extracellular; that stretch reads DFGHSMGDKIDKPVKMR. Residues 139 to 159 traverse the membrane as a helical segment; the sequence is AVVIFALGFWILDVANNTLQG. Residues 160–180 are Cytoplasmic-facing; it reads PCRAFLGDLAAGDAQKTRTAN. Residues 181 to 201 traverse the membrane as a helical segment; it reads AFFSFFMAVGNVLGYAAGSYT. Residues 202 to 223 lie on the Extracellular side of the membrane; the sequence is NLYKIFPFTMTKACDIYCANLK. Residues 224 to 244 traverse the membrane as a helical segment; that stretch reads SCFFLSITLLLVVTIIALWYV. Residues 245–276 lie on the Cytoplasmic side of the membrane; that stretch reads EDKQWSPKADSDNEKTPFFGEIFGAFKVMKRP. The helical transmembrane segment at 277 to 297 threads the bilayer; that stretch reads MWMLLIVTALNWIAWFPFLLY. Residues 298 to 323 lie on the Extracellular side of the membrane; that stretch reads DTDWMGREVYGGDSKGDDKMKKLYNQ. A helical membrane pass occupies residues 324–344; the sequence is GIHVGALGLMLNSIVLGVMSL. The Cytoplasmic portion of the chain corresponds to 345–358; sequence GIEGISRKMGGAKR. A helical transmembrane segment spans residues 359 to 379; sequence LWGAVNIILAVCLAMTVLVTK. The Extracellular segment spans residues 380–402; the sequence is KAEEHRRIAGPMALPTDGIRAGA. Residues 403 to 423 form a helical membrane-spanning segment; the sequence is LTLFALLGIPLAITFSIPFAL. Over 424-443 the chain is Cytoplasmic; it reads ASIISSSSGAGQRLSLGVLN. The helical transmembrane segment at 444 to 464 threads the bilayer; sequence MAIVIPQMIVSFGVGPIDALF. Residues 465-468 lie on the Extracellular side of the membrane; the sequence is GDGN. Residues 469 to 489 traverse the membrane as a helical segment; that stretch reads LPGFVVGAIAAAVSSIVAFTV. At 490 to 491 the chain is on the cytoplasmic side; sequence LP.

Belongs to the glycoside-pentoside-hexuronide (GPH) cation symporter transporter (TC 2.A.2.4) family. Expressed in anthers.

The protein localises to the cell membrane. Its pathway is glycan biosynthesis; sucrose metabolism. Its function is as follows. May be responsible for the transport of glucosides into the cell, with the concomitant uptake of protons (symport system). Does not seem to transport sucrose. In Arabidopsis thaliana (Mouse-ear cress), this protein is Sucrose transport protein SUC7.